The sequence spans 544 residues: CTP synthase (544 aa).

An amidoligase domain region spans residues 1-266 (MTKFIFVTGG…DDLICERFGL (266 aa)). Residue serine 13 coordinates CTP. UTP is bound at residue serine 13. Residues 14-19 (SLGKGI) and aspartate 71 each bind ATP. Residues aspartate 71 and glutamate 140 each contribute to the Mg(2+) site. Residues 147-149 (DIE), 187-192 (KTKPTQ), and lysine 223 each bind CTP. UTP is bound by residues 187 to 192 (KTKPTQ) and lysine 223. A Glutamine amidotransferase type-1 domain is found at 291 to 543 (TVAMVGKYVE…VKAAKNYSEA (253 aa)). Position 354 (glycine 354) interacts with L-glutamine. Cysteine 381 acts as the Nucleophile; for glutamine hydrolysis in catalysis. L-glutamine is bound by residues 382–385 (LGMQ), glutamate 404, and arginine 471. Catalysis depends on residues histidine 516 and glutamate 518.

The protein belongs to the CTP synthase family. As to quaternary structure, homotetramer.

It carries out the reaction UTP + L-glutamine + ATP + H2O = CTP + L-glutamate + ADP + phosphate + 2 H(+). The catalysed reaction is L-glutamine + H2O = L-glutamate + NH4(+). The enzyme catalyses UTP + NH4(+) + ATP = CTP + ADP + phosphate + 2 H(+). It participates in pyrimidine metabolism; CTP biosynthesis via de novo pathway; CTP from UDP: step 2/2. Its activity is regulated as follows. Allosterically activated by GTP, when glutamine is the substrate; GTP has no effect on the reaction when ammonia is the substrate. The allosteric effector GTP functions by stabilizing the protein conformation that binds the tetrahedral intermediate(s) formed during glutamine hydrolysis. Inhibited by the product CTP, via allosteric rather than competitive inhibition. Catalyzes the ATP-dependent amination of UTP to CTP with either L-glutamine or ammonia as the source of nitrogen. Regulates intracellular CTP levels through interactions with the four ribonucleotide triphosphates. This chain is CTP synthase, found in Psychrobacter arcticus (strain DSM 17307 / VKM B-2377 / 273-4).